Reading from the N-terminus, the 148-residue chain is NADPH-dependent 7-cyano-7-deazaguanine reductase (148 aa).

The active-site Thioimide intermediate is Cys50. The Proton donor role is filled by Asp57. Substrate is bound by residues 72 to 74 (VES) and 91 to 92 (HE).

The protein belongs to the GTP cyclohydrolase I family. QueF type 1 subfamily.

The protein resides in the cytoplasm. The enzyme catalyses 7-aminomethyl-7-carbaguanine + 2 NADP(+) = 7-cyano-7-deazaguanine + 2 NADPH + 3 H(+). Its pathway is tRNA modification; tRNA-queuosine biosynthesis. Catalyzes the NADPH-dependent reduction of 7-cyano-7-deazaguanine (preQ0) to 7-aminomethyl-7-deazaguanine (preQ1). This Helicobacter pylori (strain J99 / ATCC 700824) (Campylobacter pylori J99) protein is NADPH-dependent 7-cyano-7-deazaguanine reductase.